A 522-amino-acid polypeptide reads, in one-letter code: Nuclear pore glycoprotein p62 (522 aa).

S2 carries the post-translational modification N-acetylserine. 5 consecutive repeat copies span residues 6-7, 44-45, 76-77, 114-115, and 142-143. The segment at 6 to 143 is 5 X 2 AA repeats of F-G; that stretch reads FGGTGAPTGG…GTAPTGFVFG (138 aa). A compositionally biased stretch (polar residues) spans 169-179; that stretch reads SGFNIGSAGNS. Disordered regions lie at residues 169–215 and 260–288; these read SGFN…ATIT and APGAASGTSTTTSTAATATATTTSSSSTT. Low complexity-rich tracts occupy residues 180-215 and 262-288; these read AQPTAPATLPFTPATPAATTAGATQPAAPTPTATIT and GAASGTSTTTSTAATATATTTSSSSTT. Residues 328 to 458 are required for centrosome localization; it reads MTYAQLESLI…QDLKDIIEHL (131 aa). Residues 328 to 458 are a coiled coil; it reads MTYAQLESLI…QDLKDIIEHL (131 aa). An O-linked (GlcNAc) threonine glycan is attached at T373. A phosphoserine mark is found at S408 and S418. An O-linked (GlcNAc) serine glycan is attached at S468.

Belongs to the nucleoporin NSP1/NUP62 family. As to quaternary structure, component of the p62 complex, a complex at least composed of NUP62, NUP54, and NUP58. Interacts with NUP88. Interacts with NUTF2. Interacts with HIKESHI. Interacts with OSBPL8. Interacts with CAPG. Interacts with SAS6 and TUBG1 at the centrosome. Interacts with MCM3AP isoform GANP. In terms of assembly, (Microbial infection) Interacts with Epstein-barr virus BGLF4; this interaction allows BGLF4 nuclear entry. O-glycosylated. Contains about 10 N-acetylglucosamine side chain sites predicted for the entire protein, among which only one in the C-terminal. Post-translationally, the inner channel of the NPC has a different redox environment from the cytoplasm and allows the formation of interchain disulfide bonds between some nucleoporins, the significant increase of these linkages upon oxidative stress reduces the permeability of the NPC.

Its subcellular location is the nucleus. The protein localises to the nuclear pore complex. The protein resides in the cytoplasm. It localises to the cytoskeleton. It is found in the spindle pole. Its subcellular location is the nucleus envelope. The protein localises to the microtubule organizing center. The protein resides in the centrosome. In terms of biological role, essential component of the nuclear pore complex. The N-terminal is probably involved in nucleocytoplasmic transport. The C-terminal is involved in protein-protein interaction probably via coiled-coil formation, promotes its association with centrosomes and may function in anchorage of p62 to the pore complex. Plays a role in mitotic cell cycle progression by regulating centrosome segregation, centriole maturation and spindle orientation. It might be involved in protein recruitment to the centrosome after nuclear breakdown. This Homo sapiens (Human) protein is Nuclear pore glycoprotein p62 (NUP62).